The following is a 125-amino-acid chain: Putative superoxide reductase (125 aa).

The Fe cation site is built by glutamate 12, histidine 14, histidine 40, histidine 46, cysteine 110, and histidine 113.

This sequence belongs to the desulfoferrodoxin family. Fe cation serves as cofactor.

It carries out the reaction reduced [rubredoxin] + superoxide + 2 H(+) = oxidized [rubredoxin] + H2O2. Uses electrons from reduced NADP, by way of rubredoxin and an oxidoreductase, to catalyze the reduction of superoxide to hydrogen peroxide. The polypeptide is Putative superoxide reductase (Archaeoglobus fulgidus (strain ATCC 49558 / DSM 4304 / JCM 9628 / NBRC 100126 / VC-16)).